A 786-amino-acid chain; its full sequence is Pheromone-regulated membrane protein 10 (786 aa).

The segment covering 1 to 28 (MADSGDKDVSKSVRFDKESIESKKRSSV) has biased composition (basic and acidic residues). Disordered regions lie at residues 1–65 (MADS…EDGN) and 77–103 (NGGA…DNDN). Over residues 29–42 (DDSASSYSSSSSGQ) the composition is skewed to low complexity. 10 helical membrane-spanning segments follow: residues 469-489 (WVCV…AFGG), 491-511 (WINL…QFIL), 521-541 (VFEI…GSIP), 545-565 (ICFG…YIIL), 584-604 (FYAI…AALF), 620-640 (PISP…ISLI), 645-665 (WTQL…TYWS), 675-695 (FTAA…SRIW), 697-717 (GLAV…GIAS), and 751-771 (FGIT…ASTL).

This sequence belongs to the ThrE exporter (TC 2.A.79) family.

Its subcellular location is the membrane. This Candida glabrata (strain ATCC 2001 / BCRC 20586 / JCM 3761 / NBRC 0622 / NRRL Y-65 / CBS 138) (Yeast) protein is Pheromone-regulated membrane protein 10.